The primary structure comprises 371 residues: Protein disulfide isomerase-like 2-2 (371 aa).

The N-terminal stretch at 1–27 (MAIPRISPRKTLPLFAALALALAWAFA) is a signal peptide. 2 consecutive Thioredoxin domains span residues 28-143 (APAF…TEGG) and 147-262 (KLAT…EKCG). Catalysis depends on nucleophile residues cysteine 64, cysteine 67, cysteine 183, and cysteine 186. Intrachain disulfides connect cysteine 64-cysteine 67 and cysteine 183-cysteine 186.

Belongs to the protein disulfide isomerase family.

It is found in the secreted. It carries out the reaction Catalyzes the rearrangement of -S-S- bonds in proteins.. Acts as a protein-folding catalyst that interacts with nascent polypeptides to catalyze the formation, isomerization, and reduction or oxidation of disulfide bonds. May play a role in storage protein biogenesis. The sequence is that of Protein disulfide isomerase-like 2-2 (PDIL2-2) from Oryza sativa subsp. japonica (Rice).